The sequence spans 415 residues: Phosphoglycerate kinase (415 aa).

Substrate contacts are provided by residues 28 to 30, Arg-44, 67 to 70, Arg-124, and Arg-164; these read DLN and HQGR. Residues Glu-336 and 362–365 each bind ATP; that span reads GGHF.

This sequence belongs to the phosphoglycerate kinase family.

The protein resides in the cytoplasm. The catalysed reaction is (2R)-3-phosphoglycerate + ATP = (2R)-3-phospho-glyceroyl phosphate + ADP. It participates in carbohydrate degradation; glycolysis; pyruvate from D-glyceraldehyde 3-phosphate: step 2/5. This Aeropyrum pernix (strain ATCC 700893 / DSM 11879 / JCM 9820 / NBRC 100138 / K1) protein is Phosphoglycerate kinase (pgk).